A 564-amino-acid polypeptide reads, in one-letter code: Myb-like protein F (564 aa).

Disordered stretches follow at residues 22-107 (YNNS…NYNN), 122-203 (NYNN…YNGG), and 310-410 (NYNN…TKKY). Residues 23–79 (NNSNHYNDNNDNNNNNNNNNNDNNNNDNNNNNNNNNNSIINNESDNESNGTSNNYND) show a composition bias toward low complexity. Positions 82–96 (NDNHHHHQDDEHHGN) are enriched in basic and acidic residues. Low complexity-rich tracts occupy residues 97 to 107 (GNDNDNENYNN), 135 to 173 (EINSNHNNDNNNNTNNNDNSSNNNNNNNNSNNNNNNNSK), 193 to 203 (NNNNNNKYNGG), and 310 to 364 (NYNN…NSSN). A compositionally biased stretch (basic and acidic residues) spans 365-409 (KEYKEKEYKEKEYKEKEFKESKDSSLKRKSSSDDDGDDSGRDTKK). An SANT domain is found at 412–464 (PGRTVWTLEEEELYKEVFNHYGKNWKKIKTHFPDKSKSQVTSHGQYLIKINKL). Low complexity predominate over residues 519–556 (NNENTNDNNNHNNNNYNDNNNNSNNNNNFNNSNNNNTN). Positions 519-564 (NNENTNDNNNHNNNNYNDNNNNSNNNNNFNNSNNNNTNKFIDEDDD) are disordered.

The protein localises to the nucleus. The polypeptide is Myb-like protein F (mybF) (Dictyostelium discoideum (Social amoeba)).